The chain runs to 205 residues: Probable GTP-binding protein EngB (205 aa).

The EngB-type G domain occupies 22-196 (NLPEVAFVGR…LKVLDEFIHK (175 aa)). GTP-binding positions include 30–37 (GRSNVGKS), 57–61 (GRTQL), 76–79 (DLPG), 143–146 (TKVD), and 175–177 (FSA). Mg(2+)-binding residues include serine 37 and threonine 59.

Belongs to the TRAFAC class TrmE-Era-EngA-EngB-Septin-like GTPase superfamily. EngB GTPase family. The cofactor is Mg(2+).

In terms of biological role, necessary for normal cell division and for the maintenance of normal septation. The polypeptide is Probable GTP-binding protein EngB (Desulforamulus reducens (strain ATCC BAA-1160 / DSM 100696 / MI-1) (Desulfotomaculum reducens)).